A 668-amino-acid chain; its full sequence is MPLTPGTLLAGRYELLALLGEGGSAQVYRAQDGLLGREVALKVMHDYLPESDRSRFLREVRTLARLTHPGVVPVLDLGQEPEAGRPFFTMPLLTGGPITRLGPLEDAPGPLARFLTAAAFASRALHHVHSHGIVHRDLTPGNVLLDDTGLPRIMDFGLVALSEQTRHLTRSGVTLGTPAYMAPEQAKGGGVDARSDLYALGAVLYRVACGSPPFVGDSDQSVLYQHVYEPVPDPRDLNPAVPDAVARVLLWLLAKRADRRPQSGAALAHLWALARRDLWTTHARGQYRGGRARTGEHPDGPARVSDMQELWSVALPGEVTWPAAVVGEGDLVAVGTRGGQLVLTHTSGRPFATYAARDEVTAPATLIGGHVLYGAWDGTLRRVELQSGSEVWRHQARAEFTGAPTVWGGRLLAPSRDGHLHALSLRTGELAWAYRAGGSLAASPLVWAGAALQCDETGWLHALDARSGTPLWKVEVGTVHATPALLPGPPGTATLVIATWEGEVHAIGLEVQNGRAALAGEDAIRWTYDVEDEVWASPALTALDLPPDSGAAPDASAAPGGVVVVAGWGGKVRGLRLADGEDLWERTLDGRVTASPVISAGLVFLATEGGELLALDVRNGEVRWTCRERSGVQATPLAASGTLYVAFMDGTLRAYRNAHPEWRSEQEG.

The Protein kinase domain maps to 13-272 (YELLALLGEG…SGAALAHLWA (260 aa)). Residues 19-27 (LGEGGSAQV) and K42 contribute to the ATP site. D137 acts as the Proton acceptor in catalysis.

This sequence belongs to the protein kinase superfamily. Ser/Thr protein kinase family. It depends on pyrroloquinoline quinone as a cofactor. Autophosphorylated.

It catalyses the reaction L-seryl-[protein] + ATP = O-phospho-L-seryl-[protein] + ADP + H(+). The enzyme catalyses L-threonyl-[protein] + ATP = O-phospho-L-threonyl-[protein] + ADP + H(+). Autokinase activity is stimulated by DNA damage. Stimulated by PQQ and DNA ends in vitro. Plays an important role in radiation resistance and DNA double-strand break (DSB) repair. Involved in transcriptional regulation of genes important for bacterial stress response. Phosphorylates PprA in vitro. This Deinococcus radiodurans (strain ATCC 13939 / DSM 20539 / JCM 16871 / CCUG 27074 / LMG 4051 / NBRC 15346 / NCIMB 9279 / VKM B-1422 / R1) protein is DNA damage-responsive serine/threonine-protein kinase RqkA (rqkA).